We begin with the raw amino-acid sequence, 119 residues long: Succinate dehydrogenase assembly factor 2, mitochondrial (119 aa).

The protein belongs to the SDHAF2 family. In terms of assembly, interacts with the flavoprotein subunit within the SDH catalytic dimer.

It is found in the mitochondrion matrix. Functionally, plays an essential role in the assembly of succinate dehydrogenase (SDH), an enzyme complex (also referred to as respiratory complex II) that is a component of both the tricarboxylic acid (TCA) cycle and the mitochondrial electron transport chain, and which couples the oxidation of succinate to fumarate with the reduction of ubiquinone (coenzyme Q) to ubiquinol. Required for flavinylation (covalent attachment of FAD) of the flavoprotein subunit of the SDH catalytic dimer. In Caenorhabditis elegans, this protein is Succinate dehydrogenase assembly factor 2, mitochondrial.